A 23-amino-acid polypeptide reads, in one-letter code: Dahlein-4.3 (23 aa).

As to expression, expressed by the skin dorsal glands.

Its subcellular location is the secreted. Has no antimicrobial activity. This Ranoidea dahlii (Dahl's aquatic frog) protein is Dahlein-4.3.